Reading from the N-terminus, the 297-residue chain is tRNA pseudouridine synthase B (297 aa).

Residue Asp-44 is the Nucleophile of the active site.

The protein belongs to the pseudouridine synthase TruB family. Type 1 subfamily.

It catalyses the reaction uridine(55) in tRNA = pseudouridine(55) in tRNA. Responsible for synthesis of pseudouridine from uracil-55 in the psi GC loop of transfer RNAs. This is tRNA pseudouridine synthase B from Corynebacterium glutamicum (strain R).